Consider the following 356-residue polypeptide: Branched-chain-amino-acid aminotransferase 6 (356 aa).

K199 bears the N6-(pyridoxal phosphate)lysine mark.

The protein belongs to the class-IV pyridoxal-phosphate-dependent aminotransferase family. Pyridoxal 5'-phosphate is required as a cofactor.

The protein localises to the cytoplasm. The catalysed reaction is L-leucine + 2-oxoglutarate = 4-methyl-2-oxopentanoate + L-glutamate. The enzyme catalyses L-isoleucine + 2-oxoglutarate = (S)-3-methyl-2-oxopentanoate + L-glutamate. It catalyses the reaction L-valine + 2-oxoglutarate = 3-methyl-2-oxobutanoate + L-glutamate. It functions in the pathway amino-acid biosynthesis; L-isoleucine biosynthesis; L-isoleucine from 2-oxobutanoate: step 4/4. It participates in amino-acid biosynthesis; L-leucine biosynthesis; L-leucine from 3-methyl-2-oxobutanoate: step 4/4. Its pathway is amino-acid biosynthesis; L-valine biosynthesis; L-valine from pyruvate: step 4/4. Converts 2-oxo acids to branched-chain amino acids. Acts on leucine, isoleucine and valine. In Arabidopsis thaliana (Mouse-ear cress), this protein is Branched-chain-amino-acid aminotransferase 6 (BCAT6).